The chain runs to 264 residues: Thymidylate synthase (264 aa).

R21 is a binding site for dUMP. H51 provides a ligand contact to (6R)-5,10-methylene-5,6,7,8-tetrahydrofolate. DUMP is bound at residue 126 to 127 (RR). C146 acts as the Nucleophile in catalysis. DUMP contacts are provided by residues 166–169 (RSAD), N177, and 207–209 (HLY). Residue D169 coordinates (6R)-5,10-methylene-5,6,7,8-tetrahydrofolate. Residue S263 participates in (6R)-5,10-methylene-5,6,7,8-tetrahydrofolate binding.

Belongs to the thymidylate synthase family. Bacterial-type ThyA subfamily. In terms of assembly, homodimer.

The protein localises to the cytoplasm. The enzyme catalyses dUMP + (6R)-5,10-methylene-5,6,7,8-tetrahydrofolate = 7,8-dihydrofolate + dTMP. It functions in the pathway pyrimidine metabolism; dTTP biosynthesis. Its function is as follows. Catalyzes the reductive methylation of 2'-deoxyuridine-5'-monophosphate (dUMP) to 2'-deoxythymidine-5'-monophosphate (dTMP) while utilizing 5,10-methylenetetrahydrofolate (mTHF) as the methyl donor and reductant in the reaction, yielding dihydrofolate (DHF) as a by-product. This enzymatic reaction provides an intracellular de novo source of dTMP, an essential precursor for DNA biosynthesis. The protein is Thymidylate synthase of Shouchella clausii (strain KSM-K16) (Alkalihalobacillus clausii).